A 580-amino-acid polypeptide reads, in one-letter code: MRVLFILFLFYFYTYTEAQQYYPIDPTGKCEQYIGDSVITPCNSIYVSSTANQSTAMLSLNLYFSLLGGSSASCQNAYTFATLCSTYLPECEIFIDNSTNKEIAMPKRVCLDTCNSVSKNCQITSYFDCNQLEPISKLPLFPKESSDYNLTTYGGELNYRLDCYDPPKSNETTVIGYCPFPLVFRNRTIVGKGSDSLDNSENYGYTYVSEDSYCTIPCPAPIFSEKQWDNIFDTSDAISLVSLLCSVYLFITYMVINPKRNKYDYFFSFFVLSIILMSIAGTIGFSVGGTRKLLCPEINRRGVYTDPAVAAAGWIFQFAIINAILWFSINSFELWFQIKFIKRKLHLIKFYILAVLVISIALSVPLSAIGEFNAGLGNFVVWIESGKYQNWFFWGPLGIVLTVGTTFIGLVIWEIYKIVSSTNKSDFFKLQLKPLMNMLLIYLTFVYLFGYNFYIHNSLNGFYGSSEEFKNCIISTDGKDCRIQGPPYSSILMFVFCLRIYGVYCIALYGFSPKTRSIWSNSIVFNNSMANKLKTLYISSGTTKGGTSSTDIKMSTNNNSNMDSGGGKSSSMEPDEIILR.

Residues 1 to 18 (MRVLFILFLFYFYTYTEA) form the signal peptide. Residues 19-236 (QQYYPIDPTG…QWDNIFDTSD (218 aa)) are Extracellular-facing. Residues 25–154 (DPTGKCEQYI…SSDYNLTTYG (130 aa)) form the FZ domain. 5 N-linked (GlcNAc...) asparagine glycosylation sites follow: asparagine 52, asparagine 97, asparagine 149, asparagine 170, and asparagine 186. The helical transmembrane segment at 237-257 (AISLVSLLCSVYLFITYMVIN) threads the bilayer. Over 258-264 (PKRNKYD) the chain is Cytoplasmic. The helical transmembrane segment at 265-285 (YFFSFFVLSIILMSIAGTIGF) threads the bilayer. The Extracellular segment spans residues 286 to 308 (SVGGTRKLLCPEINRRGVYTDPA). A helical membrane pass occupies residues 309-329 (VAAAGWIFQFAIINAILWFSI). At 330–349 (NSFELWFQIKFIKRKLHLIK) the chain is on the cytoplasmic side. The helical transmembrane segment at 350–370 (FYILAVLVISIALSVPLSAIG) threads the bilayer. At 371–391 (EFNAGLGNFVVWIESGKYQNW) the chain is on the extracellular side. Residues 392 to 412 (FFWGPLGIVLTVGTTFIGLVI) traverse the membrane as a helical segment. The Cytoplasmic portion of the chain corresponds to 413–434 (WEIYKIVSSTNKSDFFKLQLKP). The helical transmembrane segment at 435–455 (LMNMLLIYLTFVYLFGYNFYI) threads the bilayer. At 456-490 (HNSLNGFYGSSEEFKNCIISTDGKDCRIQGPPYSS) the chain is on the extracellular side. The chain crosses the membrane as a helical span at residues 491–511 (ILMFVFCLRIYGVYCIALYGF). The Cytoplasmic segment spans residues 512–580 (SPKTRSIWSN…SMEPDEIILR (69 aa)). The Lys-Thr-X-X-X-Trp motif, mediates interaction with the PDZ domain of Dvl family members signature appears at 514–519 (KTRSIW). The tract at residues 542–580 (TTKGGTSSTDIKMSTNNNSNMDSGGGKSSSMEPDEIILR) is disordered. Over residues 551-563 (DIKMSTNNNSNMD) the composition is skewed to polar residues.

This sequence belongs to the G-protein coupled receptor Fz/Smo family.

Its subcellular location is the membrane. The sequence is that of Frizzled and smoothened-like protein K (fslK) from Dictyostelium discoideum (Social amoeba).